Here is a 263-residue protein sequence, read N- to C-terminus: Undecaprenyl-diphosphatase (263 aa).

6 consecutive transmembrane segments (helical) span residues 40–60 (PGVL…LVYF), 87–107 (LLII…DFFV), 109–129 (AFHN…LLFF), 186–206 (FSFL…LLEW), 219–239 (AGAV…MGVV), and 243–263 (RLYA…AISS).

Belongs to the UppP family.

Its subcellular location is the cell inner membrane. It carries out the reaction di-trans,octa-cis-undecaprenyl diphosphate + H2O = di-trans,octa-cis-undecaprenyl phosphate + phosphate + H(+). Its function is as follows. Catalyzes the dephosphorylation of undecaprenyl diphosphate (UPP). Confers resistance to bacitracin. This Syntrophotalea carbinolica (strain DSM 2380 / NBRC 103641 / GraBd1) (Pelobacter carbinolicus) protein is Undecaprenyl-diphosphatase.